Here is a 20-residue protein sequence, read N- to C-terminus: Apidaecin 1+ (20 aa).

The segment at 1–20 (GKPNRPRPAPIQPRPPHPRL) is disordered.

It belongs to the apidaecin family.

Its subcellular location is the secreted. In terms of biological role, antimicrobial peptide active against many Gram-negative enterobacterial and plant-associated bacterial species. Not active against other bacterial species like H.pylori, P.mirabilis, B.pertussis or N.gonorrhoeae. Among others, also active against C.jejuni and L.pneumophila but not against Y.enterocolitica. Functionally, among others, also active against Y.enterocolitica butnot against L.pneumophila and C.jejuni. This chain is Apidaecin 1+, found in Pimpla disparis (Parasitic wasp).